The sequence spans 153 residues: Insulin-like growth factor 1.S (153 aa).

4 cysteine pairs are disulfide-bonded: C29/C38, C54/C96, C66/C109, and C100/C109. The tract at residues 49–77 (GPETLCGAELVDTLQFVCGDRGFYFSKPT) is b. Positions 78–89 (GYGSNNRRSHHR) are c. The a stretch occupies residues 90 to 110 (GIVDECCFQSCDFRRLEMYCA). The segment at 111–118 (PAKQAKSA) is d. Residues 119-153 (RSVRTQRHTDMPKAQKEVHPKNTSRGNTGSRGFRM) constitute a propeptide, e peptide. The interval 119-153 (RSVRTQRHTDMPKAQKEVHPKNTSRGNTGSRGFRM) is disordered. The segment covering 125 to 138 (RHTDMPKAQKEVHP) has biased composition (basic and acidic residues). Residues 139 to 153 (KNTSRGNTGSRGFRM) show a composition bias toward polar residues.

It belongs to the insulin family. Expressed in adult liver, lung, heart, kidney and peritoneal fat.

Its subcellular location is the secreted. The insulin-like growth factors, isolated from plasma, are structurally and functionally related to insulin but have a much higher growth-promoting activity. Promotes head development by inhibiting Wnt signaling during embryogenesis. Acts as a ligand for IGF1R. Binds to the alpha subunit of IGF1R, leading to the activation of the intrinsic tyrosine kinase activity which autophosphorylates tyrosine residues in the beta subunit thus initiatiating a cascade of down-stream signaling events leading to activation of the PI3K-AKT/PKB and the Ras-MAPK pathways. Binds to integrins. Its binding to integrins and subsequent ternary complex formation with integrins and IGFR1 are essential for IGF1 signaling. This chain is Insulin-like growth factor 1.S, found in Xenopus laevis (African clawed frog).